Here is a 1318-residue protein sequence, read N- to C-terminus: DNA-directed RNA polymerase subunit beta' (1318 aa).

Positions 60, 62, 75, and 78 each coordinate Zn(2+). Asp-535, Asp-537, and Asp-539 together coordinate Mg(2+). The Zn(2+) site is built by Cys-890, Cys-967, Cys-974, and Cys-977.

The protein belongs to the RNA polymerase beta' chain family. In terms of assembly, the RNAP catalytic core consists of 2 alpha, 1 beta, 1 beta' and 1 omega subunit. When a sigma factor is associated with the core the holoenzyme is formed, which can initiate transcription. Mg(2+) is required as a cofactor. Zn(2+) serves as cofactor.

The catalysed reaction is RNA(n) + a ribonucleoside 5'-triphosphate = RNA(n+1) + diphosphate. Functionally, DNA-dependent RNA polymerase catalyzes the transcription of DNA into RNA using the four ribonucleoside triphosphates as substrates. The protein is DNA-directed RNA polymerase subunit beta' of Rhodococcus jostii (strain RHA1).